A 490-amino-acid polypeptide reads, in one-letter code: Cis-aconitate decarboxylase (490 aa).

Belongs to the PrpD family. In terms of assembly, homodimer.

It localises to the mitochondrion. It catalyses the reaction cis-aconitate + H(+) = itaconate + CO2. Its function is as follows. Involved in the production of itaconic acid, a soluble unsaturated dicarboxylic acid mainly produced from sugars. The protein is Cis-aconitate decarboxylase (cad1) of Aspergillus terreus (strain NIH 2624 / FGSC A1156).